The primary structure comprises 522 residues: Endochitinase 11 (522 aa).

The N-terminal stretch at 1–24 (MLFSMVMFTERWWVGSKDCPRVPA) is a signal peptide. N-linked (GlcNAc...) asparagine glycosylation is found at Asn148 and Asn275. In terms of domain architecture, GH18 spans 235–522 (KHVYAPYVDF…ALTCLRNSTA (288 aa)). Residue Glu346 is the Proton donor of the active site. N-linked (GlcNAc...) asparagine glycosylation is found at Asn455 and Asn519.

The protein belongs to the glycosyl hydrolase 18 family. Chitinase class V subfamily.

It localises to the secreted. It carries out the reaction Random endo-hydrolysis of N-acetyl-beta-D-glucosaminide (1-&gt;4)-beta-linkages in chitin and chitodextrins.. Its function is as follows. Secreted chitinase involved in the degradation of chitin, a component of the cell walls of fungi and exoskeletal elements of some animals (including worms and arthropods). Participates in the infection process and directly acts in the penetration process of the host cuticle. This chain is Endochitinase 11 (chi11), found in Metarhizium anisopliae (Entomophthora anisopliae).